Consider the following 924-residue polypeptide: Protein translocase subunit SecA (924 aa).

Residues glutamine 87, 105–109, and aspartate 517 contribute to the ATP site; that span reads GEGKT. The interval 886–906 is disordered; it reads VPAADRDPNDPSTWGKVGRNE. Residues cysteine 908, cysteine 910, cysteine 919, and histidine 920 each coordinate Zn(2+).

Belongs to the SecA family. In terms of assembly, monomer and homodimer. Part of the essential Sec protein translocation apparatus which comprises SecA, SecYEG and auxiliary proteins SecDF-YajC and YidC. Requires Zn(2+) as cofactor.

Its subcellular location is the cell inner membrane. The protein localises to the cytoplasm. It carries out the reaction ATP + H2O + cellular proteinSide 1 = ADP + phosphate + cellular proteinSide 2.. Part of the Sec protein translocase complex. Interacts with the SecYEG preprotein conducting channel. Has a central role in coupling the hydrolysis of ATP to the transfer of proteins into and across the cell membrane, serving both as a receptor for the preprotein-SecB complex and as an ATP-driven molecular motor driving the stepwise translocation of polypeptide chains across the membrane. In Azorhizobium caulinodans (strain ATCC 43989 / DSM 5975 / JCM 20966 / LMG 6465 / NBRC 14845 / NCIMB 13405 / ORS 571), this protein is Protein translocase subunit SecA.